Reading from the N-terminus, the 122-residue chain is uncharacterized protein (122 aa).

The N-terminal stretch at 1-22 is a signal peptide; the sequence is MNMMRIFYIGLSGVGMMFSSMA.

This is an uncharacterized protein from Escherichia coli (strain K12).